The primary structure comprises 182 residues: ATP-dependent protease subunit HslV (182 aa).

Thr-12 is an active-site residue. 3 residues coordinate Na(+): Ala-167, Cys-170, and Thr-173.

It belongs to the peptidase T1B family. HslV subfamily. As to quaternary structure, a double ring-shaped homohexamer of HslV is capped on each side by a ring-shaped HslU homohexamer. The assembly of the HslU/HslV complex is dependent on binding of ATP.

The protein localises to the cytoplasm. It catalyses the reaction ATP-dependent cleavage of peptide bonds with broad specificity.. Its activity is regulated as follows. Allosterically activated by HslU binding. Its function is as follows. Protease subunit of a proteasome-like degradation complex believed to be a general protein degrading machinery. This Chlorobium luteolum (strain DSM 273 / BCRC 81028 / 2530) (Pelodictyon luteolum) protein is ATP-dependent protease subunit HslV.